Reading from the N-terminus, the 157-residue chain is ATP synthase subunit b (157 aa).

Residues 11–31 (LIMFAMFTWFCMKFIWPPIVM) traverse the membrane as a helical segment.

It belongs to the ATPase B chain family. As to quaternary structure, F-type ATPases have 2 components, F(1) - the catalytic core - and F(0) - the membrane proton channel. F(1) has five subunits: alpha(3), beta(3), gamma(1), delta(1), epsilon(1). F(0) has three main subunits: a(1), b(2) and c(10-14). The alpha and beta chains form an alternating ring which encloses part of the gamma chain. F(1) is attached to F(0) by a central stalk formed by the gamma and epsilon chains, while a peripheral stalk is formed by the delta and b chains.

It localises to the cell inner membrane. F(1)F(0) ATP synthase produces ATP from ADP in the presence of a proton or sodium gradient. F-type ATPases consist of two structural domains, F(1) containing the extramembraneous catalytic core and F(0) containing the membrane proton channel, linked together by a central stalk and a peripheral stalk. During catalysis, ATP synthesis in the catalytic domain of F(1) is coupled via a rotary mechanism of the central stalk subunits to proton translocation. Its function is as follows. Component of the F(0) channel, it forms part of the peripheral stalk, linking F(1) to F(0). The chain is ATP synthase subunit b from Vesicomyosocius okutanii subsp. Calyptogena okutanii (strain HA).